Reading from the N-terminus, the 222-residue chain is GEM-like protein 4 (222 aa).

One can recognise a GRAM domain in the interval 95 to 173; the sequence is KIFKRLFRVS…CKIDRVNQSQ (79 aa).

This sequence belongs to the GEM family.

This chain is GEM-like protein 4, found in Arabidopsis thaliana (Mouse-ear cress).